Reading from the N-terminus, the 504-residue chain is ADP,ATP carrier protein 3 (504 aa).

12 consecutive transmembrane segments (helical) span residues 23–43 (LKLF…FGAL), 59–79 (IISF…TILY), 90–110 (YVFY…AYII), 146–166 (YGLM…LMFW), 183–203 (PVLG…LVFF), 230–250 (EMLQ…MLLF), 296–316 (IALL…PWKA), 329–349 (VHFM…FMII), 364–384 (LLTP…IIFI), 386–406 (EIGS…VGAI), 449–469 (FGKS…PTAT), and 473–493 (IIIY…WDVV).

The protein belongs to the ADP/ATP translocase tlc family.

The protein resides in the cell membrane. Functionally, provides the rickettsial cell with host ATP in exchange for rickettsial ADP. This is an obligate exchange system. This energy acquiring activity is an important component of rickettsial parasitism. The polypeptide is ADP,ATP carrier protein 3 (tlcC) (Rickettsia bellii (strain RML369-C)).